The following is a 620-amino-acid chain: Probable translation initiation factor IF-2 (620 aa).

Positions 1–10 are enriched in acidic residues; the sequence is MSDTDADADT. Residues 1–29 are disordered; sequence MSDTDADADTDAVSTTETSMNADANANAD. The segment covering 11–29 has biased composition (low complexity); sequence DAVSTTETSMNADANANAD. The region spanning 33 to 248 is the tr-type G domain; that stretch reads LRTPIVAVLG…VLMGLSQRYM (216 aa). The interval 42-49 is G1; that stretch reads GHVDHGKT. Position 42–49 (42–49) interacts with GTP; it reads GHVDHGKT. The interval 67-71 is G2; the sequence is AITQH. The interval 104–107 is G3; it reads DTPG. Residues 104–108 and 158–161 contribute to the GTP site; these read DTPGH and NKVD. The interval 158 to 161 is G4; the sequence is NKVD. Positions 162 to 183 are enriched in polar residues; it reads TTPGWTPTDGSPIQPTYESQPS. Residues 162–185 are disordered; that stretch reads TTPGWTPTDGSPIQPTYESQPSAA. Positions 226–228 are G5; that stretch reads SAI.

This sequence belongs to the TRAFAC class translation factor GTPase superfamily. Classic translation factor GTPase family. IF-2 subfamily.

Functionally, function in general translation initiation by promoting the binding of the formylmethionine-tRNA to ribosomes. Seems to function along with eIF-2. In Haloquadratum walsbyi (strain DSM 16790 / HBSQ001), this protein is Probable translation initiation factor IF-2.